The sequence spans 1401 residues: MAP kinase kinase kinase wis4 (1401 aa).

2 disordered regions span residues His67–Thr99 and Gln176–Ser205. Composition is skewed to polar residues over residues Pro72–Thr99 and Gln176–Leu191. A Protein kinase domain is found at Trp1037–Ile1306. ATP contacts are provided by residues Val1043–Val1051 and Lys1066. Asp1161 acts as the Proton acceptor in catalysis.

This sequence belongs to the protein kinase superfamily. STE Ser/Thr protein kinase family. MAP kinase kinase kinase subfamily.

The enzyme catalyses L-seryl-[protein] + ATP = O-phospho-L-seryl-[protein] + ADP + H(+). It carries out the reaction L-threonyl-[protein] + ATP = O-phospho-L-threonyl-[protein] + ADP + H(+). Its function is as follows. Involved in a signal transduction pathway that is activated in under conditions of heat shock, oxidative stress or limited nutrition. Unlike win1, it is not activated by changes in the osmolarity of the extracellular environment. Activates the wis1 MAP kinase kinase by phosphorylation. The polypeptide is MAP kinase kinase kinase wis4 (wis4) (Schizosaccharomyces pombe (strain 972 / ATCC 24843) (Fission yeast)).